A 161-amino-acid polypeptide reads, in one-letter code: PRS fimbrial major pilin protein (161 aa).

This sequence belongs to the fimbrial protein family.

Its subcellular location is the secreted. It localises to the fimbrium. Functionally, fimbriae (also called pili), polar filaments radiating from the surface of the bacterium to a length of 0.5-1.5 micrometers and numbering 100-300 per cell, enable bacteria to colonize the epithelium of specific host organs. This is PRS fimbrial major pilin protein (prsA) from Escherichia coli.